The following is a 113-amino-acid chain: Hydrogenase maturation factor HypA (113 aa).

Residue H2 coordinates Ni(2+). Residues C73, C76, C89, and C92 each contribute to the Zn(2+) site.

The protein belongs to the HypA/HybF family.

Functionally, involved in the maturation of [NiFe] hydrogenases. Required for nickel insertion into the metal center of the hydrogenase. The chain is Hydrogenase maturation factor HypA from Azotobacter vinelandii.